The sequence spans 204 residues: Urease accessory protein UreG (204 aa).

11-18 contacts GTP; that stretch reads GPVGAGKT.

It belongs to the SIMIBI class G3E GTPase family. UreG subfamily. As to quaternary structure, homodimer. UreD, UreF and UreG form a complex that acts as a GTP-hydrolysis-dependent molecular chaperone, activating the urease apoprotein by helping to assemble the nickel containing metallocenter of UreC. The UreE protein probably delivers the nickel.

The protein resides in the cytoplasm. Functionally, facilitates the functional incorporation of the urease nickel metallocenter. This process requires GTP hydrolysis, probably effectuated by UreG. The sequence is that of Urease accessory protein UreG from Staphylococcus aureus (strain MSSA476).